Reading from the N-terminus, the 710-residue chain is Ephexin-1 (710 aa).

Over residues 1-20 the composition is skewed to basic and acidic residues; sequence METKNSEDWGKPQRKSESSS. Positions 1–146 are disordered; the sequence is METKNSEDWG…TPEECPALTD (146 aa). Residues 1-272 are regulatory region; modulates activity toward RHOA, RAC1 and CDC42; it reads METKNSEDWG…VLDILQPEEI (272 aa). Positions 123-137 are enriched in polar residues; that stretch reads QEASESSSTPGNGTT. Tyrosine 177 is subject to Phosphotyrosine. The disordered stretch occupies residues 192-234; that stretch reads RRQQDAEIQGNSDGSQVGEDAGEEEEEEEEGEEEELASPPERR. The span at 211–227 shows a compositional bias: acidic residues; that stretch reads DAGEEEEEEEEGEEEEL. The DH domain maps to 273–457; sequence RLQEAMFELV…EMVVKACNEG (185 aa). The region spanning 489-601 is the PH domain; it reads WLLKQGELQQ…WMTSLAPNRR (113 aa). Positions 612 to 673 constitute an SH3 domain; the sequence is LDCPQVQCVH…PSSMTEEILN (62 aa). Positions 688–699 are enriched in basic and acidic residues; the sequence is HKMEDPQRSQNK. The segment at 688-710 is disordered; the sequence is HKMEDPQRSQNKDRRKLGSRNRQ. Residues 700–710 show a composition bias toward basic residues; it reads DRRKLGSRNRQ.

As to quaternary structure, interacts with CDK5R1 and EPHA4; activated by EPHA4 through the CDK5 kinase. Src-dependent phosphorylation at Tyr-177 upon EPHA4 activation increases the guanine exchange factor activity toward RHOA. Phosphorylation by CDK5 upon EPHA4 activation by EFNA1 may regulate dendritic spine morphogenesis. In terms of tissue distribution, highly expressed in brain and to a lower extent in eye.

The protein localises to the cytoplasm. The protein resides in the membrane. It localises to the cell projection. It is found in the growth cone. In terms of biological role, acts as a guanine nucleotide exchange factor (GEF) which differentially activates the GTPases RHOA, RAC1 and CDC42. Plays a role in axon guidance regulating ephrin-induced growth cone collapse and dendritic spine morphogenesis. Upon activation by ephrin through EPHA4, the GEF activity switches toward RHOA resulting in its activation. Activated RHOA promotes cone retraction at the expense of RAC1- and CDC42-stimulated growth cone extension. The protein is Ephexin-1 (Ngef) of Mus musculus (Mouse).